A 184-amino-acid chain; its full sequence is Photosystem I assembly protein Ycf4 (184 aa).

2 helical membrane-spanning segments follow: residues 19 to 39 and 57 to 77; these read ISNF…LLVG and IVFF…LFIS.

The protein belongs to the Ycf4 family.

It localises to the plastid. The protein resides in the chloroplast thylakoid membrane. In terms of biological role, seems to be required for the assembly of the photosystem I complex. The protein is Photosystem I assembly protein Ycf4 of Nymphaea alba (White water-lily).